Here is a 1497-residue protein sequence, read N- to C-terminus: DNA-directed RNA polymerase subunit beta' (1497 aa).

Residues cysteine 67, cysteine 69, cysteine 82, and cysteine 85 each contribute to the Zn(2+) site. The Mg(2+) site is built by aspartate 499, aspartate 501, and aspartate 503. Zn(2+)-binding residues include cysteine 867, cysteine 943, cysteine 950, and cysteine 953. Residues 1476-1497 form a disordered region; it reads ESNATERVVEEPATREGFANER. The segment covering 1482-1497 has biased composition (basic and acidic residues); sequence RVVEEPATREGFANER.

The protein belongs to the RNA polymerase beta' chain family. As to quaternary structure, the RNAP catalytic core consists of 2 alpha, 1 beta, 1 beta' and 1 omega subunit. When a sigma factor is associated with the core the holoenzyme is formed, which can initiate transcription. Mg(2+) serves as cofactor. The cofactor is Zn(2+).

The catalysed reaction is RNA(n) + a ribonucleoside 5'-triphosphate = RNA(n+1) + diphosphate. In terms of biological role, DNA-dependent RNA polymerase catalyzes the transcription of DNA into RNA using the four ribonucleoside triphosphates as substrates. This is DNA-directed RNA polymerase subunit beta' from Pelodictyon phaeoclathratiforme (strain DSM 5477 / BU-1).